A 920-amino-acid polypeptide reads, in one-letter code: Phosphoenolpyruvate carboxylase (920 aa).

Residues His138 and Lys583 contribute to the active site.

It belongs to the PEPCase type 1 family. The cofactor is Mg(2+).

The catalysed reaction is oxaloacetate + phosphate = phosphoenolpyruvate + hydrogencarbonate. In terms of biological role, forms oxaloacetate, a four-carbon dicarboxylic acid source for the tricarboxylic acid cycle. This Streptococcus pyogenes serotype M1 protein is Phosphoenolpyruvate carboxylase.